The chain runs to 725 residues: Endoglucanase G (725 aa).

A signal peptide spans 1 to 35; that stretch reads MLKTKRKLTKAIGVALSISILSSLVSFIPQTNTYA. Aspartate 93 (nucleophile) is an active-site residue. Active-site residues include histidine 408, aspartate 446, and glutamate 455. In terms of domain architecture, CBM3 spans 489-650; it reads ITNDEVIIKA…GVKVFGNEPA (162 aa). The 67-residue stretch at 658–724 folds into the Dockerin domain; the sequence is PEILYGDVNS…LLGTITQLPQ (67 aa).

The protein belongs to the glycosyl hydrolase 9 (cellulase E) family.

It catalyses the reaction Endohydrolysis of (1-&gt;4)-beta-D-glucosidic linkages in cellulose, lichenin and cereal beta-D-glucans.. The protein operates within glycan metabolism; cellulose degradation. Functionally, the biological conversion of cellulose to glucose generally requires three types of hydrolytic enzymes: (1) Endoglucanases which cut internal beta-1,4-glucosidic bonds; (2) Exocellobiohydrolases that cut the disaccharide cellobiose from the non-reducing end of the cellulose polymer chain; (3) Beta-1,4-glucosidases which hydrolyze the cellobiose and other short cello-oligosaccharides to glucose. The polypeptide is Endoglucanase G (celCCG) (Ruminiclostridium cellulolyticum (strain ATCC 35319 / DSM 5812 / JCM 6584 / H10) (Clostridium cellulolyticum)).